Reading from the N-terminus, the 738-residue chain is Junction plakoglobin (738 aa).

ARM repeat units lie at residues 128 to 167, 168 to 211, 212 to 251, 254 to 293, 294 to 337, 338 to 377, 379 to 416, 419 to 460, 466 to 506, 508 to 547, 570 to 609, and 611 to 657; these read NYQD…QLSK, KEAS…LSHH, REGL…NLLL, EGAK…LLAY, GNQE…LSVC, PSNK…NLSD, ATKQ…NLTC, GRNK…HLTS, EVAQ…NLAL, PANH…QPYT, PVNR…ELAQ, and KEAA…ADYR.

The protein belongs to the beta-catenin family. In terms of assembly, homodimer.

The protein resides in the cell junction. Its subcellular location is the adherens junction. It is found in the desmosome. The protein localises to the cytoplasm. It localises to the cytoskeleton. The protein resides in the membrane. Functionally, common junctional plaque protein. The membrane-associated plaques are architectural elements in an important strategic position to influence the arrangement and function of both the cytoskeleton and the cells within the tissue. The presence of plakoglobin in both the desmosomes and in the intermediate junctions suggests that it plays a central role in the structure and function of submembranous plaques. In Xenopus laevis (African clawed frog), this protein is Junction plakoglobin (jup).